A 214-amino-acid polypeptide reads, in one-letter code: Thiamine-phosphate synthase (214 aa).

4-amino-2-methyl-5-(diphosphooxymethyl)pyrimidine-binding positions include Q37–K41 and N73. Mg(2+) is bound by residues D74 and D93. Residue S112 participates in 4-amino-2-methyl-5-(diphosphooxymethyl)pyrimidine binding. Residue T139–S141 coordinates 2-[(2R,5Z)-2-carboxy-4-methylthiazol-5(2H)-ylidene]ethyl phosphate. K142 serves as a coordination point for 4-amino-2-methyl-5-(diphosphooxymethyl)pyrimidine. 2-[(2R,5Z)-2-carboxy-4-methylthiazol-5(2H)-ylidene]ethyl phosphate contacts are provided by residues G171 and I191 to S192.

Belongs to the thiamine-phosphate synthase family. It depends on Mg(2+) as a cofactor.

It catalyses the reaction 2-[(2R,5Z)-2-carboxy-4-methylthiazol-5(2H)-ylidene]ethyl phosphate + 4-amino-2-methyl-5-(diphosphooxymethyl)pyrimidine + 2 H(+) = thiamine phosphate + CO2 + diphosphate. It carries out the reaction 2-(2-carboxy-4-methylthiazol-5-yl)ethyl phosphate + 4-amino-2-methyl-5-(diphosphooxymethyl)pyrimidine + 2 H(+) = thiamine phosphate + CO2 + diphosphate. The catalysed reaction is 4-methyl-5-(2-phosphooxyethyl)-thiazole + 4-amino-2-methyl-5-(diphosphooxymethyl)pyrimidine + H(+) = thiamine phosphate + diphosphate. It functions in the pathway cofactor biosynthesis; thiamine diphosphate biosynthesis; thiamine phosphate from 4-amino-2-methyl-5-diphosphomethylpyrimidine and 4-methyl-5-(2-phosphoethyl)-thiazole: step 1/1. Functionally, condenses 4-methyl-5-(beta-hydroxyethyl)thiazole monophosphate (THZ-P) and 2-methyl-4-amino-5-hydroxymethyl pyrimidine pyrophosphate (HMP-PP) to form thiamine monophosphate (TMP). This chain is Thiamine-phosphate synthase, found in Listeria monocytogenes serotype 4b (strain CLIP80459).